The following is a 189-amino-acid chain: MALTFYLLVALVVLSYKSFSSLGCDLPQTHSLGNRRALILLAQMRRISPFSCLKDRHDFEFPQEEFDDKQFQKAQAISVLHEMIQQTFNLFSTKDSSAALDETLLDEFYIELDQQLNDLESCVMQEVGVIESPLMYEDSILAVRKYFQRITLYLTEKKYSSCAWEVVRAEIMRSFSLSINLQKRLKSKE.

A signal peptide spans 1 to 23 (MALTFYLLVALVVLSYKSFSSLG). 2 disulfide bridges follow: C24/C122 and C52/C162.

The protein belongs to the alpha/beta interferon family.

The protein localises to the secreted. Its function is as follows. Produced by macrophages, IFN-alpha have antiviral activities. Interferon stimulates the production of two enzymes: a protein kinase and an oligoadenylate synthetase. The polypeptide is Interferon alpha-8 (IFNA8) (Homo sapiens (Human)).